A 135-amino-acid chain; its full sequence is Galectin-1 (135 aa).

Ala2 carries the N-acetylalanine modification. The Galectin domain occupies 4-135; that stretch reads GLVASNLNLK…DFKIKCVAFE (132 aa). Residues Lys13, Lys19, and Lys29 each carry the N6-acetyllysine modification. Ser30 is modified (phosphoserine). A beta-D-galactoside contacts are provided by residues 45–49, His53, Asn62, and 69–72; these read HFNPR and WGTE. Position 108 is an N6-acetyllysine; alternate (Lys108). Residue Lys108 is modified to N6-succinyllysine; alternate. The residue at position 128 (Lys128) is an N6-acetyllysine.

Homodimer. Binds LGALS3BP. Interacts with CD2, CD3, CD4, CD6, CD7, CD43, ALCAM and CD45. Interacts with laminin (via poly-N-acetyllactosamine). Interacts with SUSD2. Interacts with cargo receptor TMED10; the interaction mediates the translocation from the cytoplasm into the ERGIC (endoplasmic reticulum-Golgi intermediate compartment) and thereby secretion. Interacts with CD69.

Its subcellular location is the secreted. It localises to the extracellular space. The protein localises to the extracellular matrix. The protein resides in the cytoplasm. Lectin that binds beta-galactoside and a wide array of complex carbohydrates. Plays a role in regulating apoptosis, cell proliferation and cell differentiation. Inhibits CD45 protein phosphatase activity and therefore the dephosphorylation of Lyn kinase. Strong inducer of T-cell apoptosis. Plays a negative role in Th17 cell differentiation via activation of the receptor CD69. This is Galectin-1 (Lgals1) from Rattus norvegicus (Rat).